The chain runs to 530 residues: Sensor protein kinase PilS (530 aa).

Transmembrane regions (helical) follow at residues 25 to 37 (LTIG…LISS), 57 to 70 (WCYL…ALFL), 76 to 98 (LLPI…YAGG), 101 to 119 (PSGI…NILL), 124 to 144 (GLVI…FLSL), and 156 to 174 (AGGL…QALV). Residues 175 to 530 (RRQEQTETLA…ITFAHPRKLS (356 aa)) lie on the Cytoplasmic side of the membrane. Positions 196 to 260 (ELNALILQRM…KQWRLNPSLR (65 aa)) constitute a PAS domain. Positions 316 to 527 (GIAHEIRNPL…CFRITFAHPR (212 aa)) constitute a Histidine kinase domain. At H319 the chain carries Phosphohistidine; by autocatalysis.

In terms of assembly, interacts with PilA.

It localises to the cell inner membrane. The enzyme catalyses ATP + protein L-histidine = ADP + protein N-phospho-L-histidine.. Functionally, member of the two-component regulatory system PilS/PilR that regulates the expression of multiple genes including the type IV pilus (T4P) major subunit PilA. Thereby, plays a major role in the regulation of multiple motility pathways. Functions as a membrane-associated protein kinase that phosphorylates PilR in response to environmental signals leading to activation of specific gene promoters including the pilin gene. In Pseudomonas aeruginosa (strain ATCC 15692 / DSM 22644 / CIP 104116 / JCM 14847 / LMG 12228 / 1C / PRS 101 / PAO1), this protein is Sensor protein kinase PilS (pilS).